We begin with the raw amino-acid sequence, 611 residues long: 1,4-alpha-glucan branching enzyme GlgB (611 aa).

Residue aspartate 302 is the Nucleophile of the active site. Glutamate 343 (proton donor) is an active-site residue.

The protein belongs to the glycosyl hydrolase 13 family. GlgB subfamily. In terms of assembly, monomer.

The catalysed reaction is Transfers a segment of a (1-&gt;4)-alpha-D-glucan chain to a primary hydroxy group in a similar glucan chain.. It participates in glycan biosynthesis; glycogen biosynthesis. Catalyzes the formation of the alpha-1,6-glucosidic linkages in glycogen by scission of a 1,4-alpha-linked oligosaccharide from growing alpha-1,4-glucan chains and the subsequent attachment of the oligosaccharide to the alpha-1,6 position. The sequence is that of 1,4-alpha-glucan branching enzyme GlgB from Fusobacterium nucleatum subsp. nucleatum (strain ATCC 25586 / DSM 15643 / BCRC 10681 / CIP 101130 / JCM 8532 / KCTC 2640 / LMG 13131 / VPI 4355).